Consider the following 172-residue polypeptide: Large ribosomal subunit protein bL17 (172 aa).

The segment covering 140–160 has biased composition (basic and acidic residues); it reads LKAEAKAKREEKKPAKKEEKP. The interval 140 to 172 is disordered; the sequence is LKAEAKAKREEKKPAKKEEKPKKAKKEKAAASN.

Belongs to the bacterial ribosomal protein bL17 family. In terms of assembly, part of the 50S ribosomal subunit. Contacts protein L32.

This is Large ribosomal subunit protein bL17 from Leptospira biflexa serovar Patoc (strain Patoc 1 / Ames).